A 164-amino-acid polypeptide reads, in one-letter code: UPF0251 protein MA_0157 (164 aa).

The segment at 91–124 (GDYRMPRGDGTGPAGQGPVGGGRSRGQGKGRGGR) is disordered. The span at 99–115 (DGTGPAGQGPVGGGRSR) shows a compositional bias: gly residues.

This sequence belongs to the UPF0251 family.

In Methanosarcina acetivorans (strain ATCC 35395 / DSM 2834 / JCM 12185 / C2A), this protein is UPF0251 protein MA_0157.